Reading from the N-terminus, the 27-residue chain is VRDICKKEAERQDLSSCENYITQRRGY.

As to quaternary structure, homodimer. In terms of processing, contains disulfide bonds. Post-translationally, glycosylated.

Inhibits trypsin (IC(50)=1.25 uM) but not chymotrypsin or papain. Has antibacterial activity against S.enterica ATCC 10708 (MIC=5 ug/ml) and S.aureus ATCC 25923 (MIC=5 ug/ml) but not against B.subtilis ATCC 6633 or P.aeruginosa ATCC 25619. Has no hemolytic activity against human erythrocytes. Is not toxic to mice. In Jatropha curcas (Barbados nut), this protein is Trypsin inhibitor 1.